The following is a 384-amino-acid chain: F-box protein At2g07140 (384 aa).

In terms of domain architecture, F-box spans 1–46; sequence MTLPELPKDLVEEILSFVPATSLKRLRSTCKGWNRLFKDDKRFTRI.

The chain is F-box protein At2g07140 from Arabidopsis thaliana (Mouse-ear cress).